We begin with the raw amino-acid sequence, 243 residues long: Ubiquinone/menaquinone biosynthesis C-methyltransferase UbiE (243 aa).

Residues threonine 69, aspartate 90, and 116–117 contribute to the S-adenosyl-L-methionine site; that span reads DA.

The protein belongs to the class I-like SAM-binding methyltransferase superfamily. MenG/UbiE family.

The enzyme catalyses a 2-demethylmenaquinol + S-adenosyl-L-methionine = a menaquinol + S-adenosyl-L-homocysteine + H(+). The catalysed reaction is a 2-methoxy-6-(all-trans-polyprenyl)benzene-1,4-diol + S-adenosyl-L-methionine = a 5-methoxy-2-methyl-3-(all-trans-polyprenyl)benzene-1,4-diol + S-adenosyl-L-homocysteine + H(+). It participates in quinol/quinone metabolism; menaquinone biosynthesis; menaquinol from 1,4-dihydroxy-2-naphthoate: step 2/2. The protein operates within cofactor biosynthesis; ubiquinone biosynthesis. Methyltransferase required for the conversion of demethylmenaquinol (DMKH2) to menaquinol (MKH2) and the conversion of 2-polyprenyl-6-methoxy-1,4-benzoquinol (DDMQH2) to 2-polyprenyl-3-methyl-6-methoxy-1,4-benzoquinol (DMQH2). In Burkholderia cenocepacia (strain ATCC BAA-245 / DSM 16553 / LMG 16656 / NCTC 13227 / J2315 / CF5610) (Burkholderia cepacia (strain J2315)), this protein is Ubiquinone/menaquinone biosynthesis C-methyltransferase UbiE.